We begin with the raw amino-acid sequence, 265 residues long: uncharacterized protein (265 aa).

2 CBS domains span residues 9 to 64 and 67 to 126; these read MTKK…EKVE and MTKR…TTPK.

This is an uncharacterized protein from Methanocaldococcus jannaschii (strain ATCC 43067 / DSM 2661 / JAL-1 / JCM 10045 / NBRC 100440) (Methanococcus jannaschii).